We begin with the raw amino-acid sequence, 554 residues long: Arginine--tRNA ligase (554 aa).

Positions 132-142 (ANPTGPIHLGG) match the 'HIGH' region motif.

It belongs to the class-I aminoacyl-tRNA synthetase family. In terms of assembly, monomer.

The protein localises to the cytoplasm. The enzyme catalyses tRNA(Arg) + L-arginine + ATP = L-arginyl-tRNA(Arg) + AMP + diphosphate. This is Arginine--tRNA ligase from Kineococcus radiotolerans (strain ATCC BAA-149 / DSM 14245 / SRS30216).